The chain runs to 789 residues: Leucine-rich repeat and fibronectin type-III domain-containing protein 2 (789 aa).

The signal sequence occupies residues 1–20 (METLLGGLLAFGMAFAVVDA). The region spanning 21–52 (CPKYCVCQNLSESLGTLCPSKGLLFVPPDIDR) is the LRRNT domain. Residues 21–534 (CPKYCVCQNL…MHSQILGGTM (514 aa)) are Extracellular-facing. A glycan (N-linked (GlcNAc...) asparagine) is linked at Asn-29. LRR repeat units follow at residues 53–74 (RTVE…DFAN), 77–98 (GLVD…SFLD), 101–122 (SLRS…TLRG), 125–146 (NLQH…AFED), 150–171 (TLED…SVRR), 174–195 (NLHQ…TFAD), and 198–219 (KLAR…PIFA). In terms of domain architecture, LRRCT spans 242–288 (NPLHCNCELLWLRRLERDDDLETCGSPGGLKGRYFWHVREEEFVCEP). The region spanning 289 to 375 (PLITQHTHKL…GEATAMVEVS (87 aa)) is the Ig-like domain. Cys-310 and Cys-359 are oxidised to a cystine. N-linked (GlcNAc...) asparagine glycosylation is found at Asn-332, Asn-341, and Asn-384. Residues 383-424 (SNSTSRTAPPKSRLSDITGSSKTSRGGGGSGGGEPPKSPPER) form a disordered region. Residues 407-416 (RGGGGSGGGE) are compositionally biased toward gly residues. Residues 421 to 518 (PPERAVLVSE…GCAQFFTKAD (98 aa)) form the Fibronectin type-III domain. Residues 535-555 (ILVIGGIIVATLLVFIVILMV) traverse the membrane as a helical segment. Residues 556–789 (RYKVCNHEAP…SSEWVMESTV (234 aa)) lie on the Cytoplasmic side of the membrane. Disordered stretches follow at residues 577-602 (SQTN…PPKV), 619-654 (SDSS…PSLD), and 668-702 (QRKE…LGPP). The span at 583-599 (QPPPPSSAPAGAPPQGP) shows a compositional bias: pro residues. Residues 619-638 (SDSSSSSSLGSGEAAGLGRA) are compositionally biased toward low complexity. The segment covering 641–650 (RIPPSAPRPK) has biased composition (pro residues). A PDZ-binding motif is present at residues 786–789 (ESTV).

It belongs to the LRFN family. As to quaternary structure, forms heteromeric complexes with LRFN1, LRFN3, LRFN4 and LRFN5. Can form homomeric complexes, but not across cell junctions. Directly interacts with 2 NMDA receptor subunits GRIN1 and GRIN2A. Interacts with DLG1, DLG2, DLG3 and DLG4. Post-translationally, glycosylated.

Its subcellular location is the membrane. The protein localises to the synapse. It is found in the postsynaptic cell membrane. Functionally, promotes neurite outgrowth in hippocampal neurons. Enhances the cell surface expression of 2 NMDA receptor subunits GRIN1 and GRIN2A. May play a role in redistributing DLG4 to the cell periphery. In Homo sapiens (Human), this protein is Leucine-rich repeat and fibronectin type-III domain-containing protein 2 (LRFN2).